The chain runs to 110 residues: uncharacterized protein (110 aa).

This is an uncharacterized protein from Human cytomegalovirus (strain AD169) (HHV-5).